The sequence spans 297 residues: Pyrroline-5-carboxylate reductase 1 (297 aa).

The protein belongs to the pyrroline-5-carboxylate reductase family.

Its subcellular location is the cytoplasm. The catalysed reaction is L-proline + NADP(+) = (S)-1-pyrroline-5-carboxylate + NADPH + 2 H(+). The enzyme catalyses L-proline + NAD(+) = (S)-1-pyrroline-5-carboxylate + NADH + 2 H(+). The protein operates within amino-acid biosynthesis; L-proline biosynthesis; L-proline from L-glutamate 5-semialdehyde: step 1/1. Functionally, catalyzes the reduction of 1-pyrroline-5-carboxylate (PCA) to L-proline. The polypeptide is Pyrroline-5-carboxylate reductase 1 (proH) (Bacillus subtilis (strain 168)).